The chain runs to 113 residues: Iron-sulfur cluster insertion protein ErpA (113 aa).

Iron-sulfur cluster is bound by residues cysteine 41, cysteine 105, and cysteine 107.

The protein belongs to the HesB/IscA family. In terms of assembly, homodimer. Iron-sulfur cluster serves as cofactor.

Required for insertion of 4Fe-4S clusters for at least IspG. This Glaesserella parasuis serovar 5 (strain SH0165) (Haemophilus parasuis) protein is Iron-sulfur cluster insertion protein ErpA.